The chain runs to 785 residues: MDAAIRGNDVIFVLKTIGVPSACRQNEDPRFVEAFKCDELERYIENNPECTLFESLRDEEAYSIVRIFMDVDLDACLDEIDYLTAIQDFIIEVSNCVARFAFTECGAIHENVIKSMRSNFSLTKSTNRDKTSFHIIFLDTYTTMDTLIAMKRTLLELSRSSENPLTRSIDTAVYRRKTTLRVVGTRKNPNCDTIHVMQPPHDNIEDYLFTYVDMNNNSYYFSLQQRLEDLVPDKLWEPGFISFEDAIKRVSKIFINSIINFNDLDENNFTTVPLVIDYVTPCALCKKRSHKHPHQLSLENGAIRIYKTGNPHSCKVKIVPLDGNKLFNIAQRILDTNSVLLTERGDHIVWINNSWKFNSEEPLITKLILSIRHQLPKEYSSELLCPRKRKTVEANIRDMLVDSVETDTYPDKLPFKNGVLDLVDGMFYSGDDAKKYTCTVSTGFKFDDTKFVEDSPEMEELMNIINDIQPLTDENKKNRELYEKTLSSCLCGATKGCLTFFFGETATGKSTTKRLLKSAIGDLFVETGQTILTDVLDKGPNPFIANMHLKRSVFCSELPDFACSGSKKIRSDNIKKLTEPCVIGRPCFSNKINNRNHATIIIDTNYKPVFDRIDNALMRRIAVVRFRTHFSQPSGREAAENNDAYDKVKLLDEGLDGKIQNNRYRFAFLYLLVKWYRKYHVPIMKLYPTPEEIPDFAFYLKIGTLLVSSSVKHIPLMTDLSKKGYILYDNVVTLPLTTFQQKISKYFNSRLFGHDIESFINRHKKFANVSDEYLQYIFIEDISSP.

Asp-170 is a catalytic residue. The tract at residues 342–469 (TERGDHIVWI…ELMNIINDIQ (128 aa)) is primase. The SF3 helicase domain maps to 477-639 (KNRELYEKTL…FSQPSGREAA (163 aa)). 503 to 510 (GETATGKS) contributes to the ATP binding site.

This sequence belongs to the orthopoxvirus OPG117 family. Homomultimer; hexamer. Interacts with OPG148.

The protein resides in the host cytoplasm. In terms of biological role, multifunctional protein required for genome uncoating and replication. Major viral uncoating protein that is required for the release of the viral genome from incoming viral cores containing the viral DNA genome. Possesses an ATPase activity that is required for hexamerization and uncoating. The chain is Uncoating factor OPG117 (OPG117) from Bos taurus (Bovine).